The primary structure comprises 557 residues: MVLSDIEIANSVTMEPISKVANQLGIDEEALCLYGKYKAKIDARQLVALKDKPDGKLILVTAISPTPAGEGKTTTSVGLVDALSAIGKKAVIALREPSLGPVFGVKGGAAGGGHAQVVPMEDINLHFTGDFHAIGVANNLLAALIDNHIHHGNSLGIDSRRITWKRVVDMNDRQLRHIVDGLQGKVNGVPREDGYDITVASEIMAILCLSENISDLKARLEKIIIGYNYQGEPVTAKDLKAGGALAALLKDAIHPNLVQTLEHTPALIHGGPFANIAHGCNSVLATKLALKYGDYAVTEAGFGADLGAEKFIDIKCRMSGLRPAAVVLVATIRALKMHGGVPKADLATENVQAVVDGLPNLDKHLANIQDVYGLPVVVAINKFPLDTDAELQAVYDACDKRGVDVVISDVWANGGAGGRELAEKVVALAEQDNQFCFVYEEDDSIETKLTKIVTKVYGGKGIRLTPAAKRELADLERLSFGNYPICMAKTQYSFSDDAKKLGAPTDFTVTISNLKVSAGAGFIVALTGAIMTMPGLPKVPASETIDIDEEGNITGLF.

66–73 is a binding site for ATP; it reads TPAGEGKT.

This sequence belongs to the formate--tetrahydrofolate ligase family.

The enzyme catalyses (6S)-5,6,7,8-tetrahydrofolate + formate + ATP = (6R)-10-formyltetrahydrofolate + ADP + phosphate. It participates in one-carbon metabolism; tetrahydrofolate interconversion. The protein is Formate--tetrahydrofolate ligase 2 of Streptococcus pyogenes serotype M18 (strain MGAS8232).